A 151-amino-acid polypeptide reads, in one-letter code: Myosin light polypeptide 6 (151 aa).

At Cys-2 the chain carries N-acetylcysteine. EF-hand domains are found at residues 7–42 (EQTAEFKEAFQLFDRTGDGKILYSQCGDVMRALGQN), 84–119 (GCFEDYVEGLRVFDKEGNGTVMGAEIRHVLVTLGEK), and 119–151 (KMTEEEVEQLVAGHEDSNGCINYEELVRMVLSG).

Myosin is a hexamer of 2 heavy chains and 4 light chains.

Functionally, regulatory light chain of myosin. Does not bind calcium. This is Myosin light polypeptide 6 (MYL6) from Gallus gallus (Chicken).